Reading from the N-terminus, the 58-residue chain is Bestoxin (58 aa).

The 56-residue stretch at 3–58 (VPGNYPLDKDGNTYTCLELGENKDCQKVCKLHGVQYGYCYAFSCWCKEYLDDKDSV) folds into the LCN-type CS-alpha/beta domain. 3 disulfides stabilise this stretch: C18-C41, C27-C46, and C31-C48.

As to expression, expressed by the venom gland.

Its subcellular location is the secreted. Its function is as follows. Beta toxins bind voltage-independently at site-4 of sodium channels (Nav) and shift the voltage of activation toward more negative potentials thereby affecting sodium channel activation and promoting spontaneous and repetitive firing. In mice, causes intense writhing. In Parabuthus transvaalicus (Transvaal thick-tailed scorpion), this protein is Bestoxin.